The sequence spans 151 residues: Ribosome maturation factor RimP (151 aa).

Belongs to the RimP family.

It localises to the cytoplasm. Its function is as follows. Required for maturation of 30S ribosomal subunits. This is Ribosome maturation factor RimP from Aliivibrio fischeri (strain ATCC 700601 / ES114) (Vibrio fischeri).